We begin with the raw amino-acid sequence, 1430 residues long: Bromodomain-containing protein homolog (1430 aa).

The C2H2-type zinc finger occupies 23-49; it reads FACPVRGCDRSYKTIMGLQYHLMKYDH. The interval 51 to 111 is disordered; sequence NPQPLTPVLT…AGGGSASGVS (61 aa). Residues 62 to 81 show a composition bias toward basic residues; sequence SRKKARSRSGGHHSTPRPHK. Residues 283–333 form a PHD-type 1 zinc finger; it reads DAVCCICLDGECQNTNVILFCDMCNLAVHQDCYGVPYIPEGQWLCRRCLQS. Residues Cys-286, Cys-289, Cys-303, Cys-306, His-311, Cys-314, Cys-327, and Cys-330 each coordinate Zn(2+). Residues 337–370 form a C2HC pre-PHD-type zinc finger; that stretch reads PVNCVLCPNAGGAFKQTDHGQWAHVVCALWIPEV. The PHD-type 2 zinc-finger motif lies at 394–457; that stretch reads LTCYVCKEKG…QKFAYCHAHT (64 aa). Positions 611–715 constitute a Bromo domain; sequence LQLNPLEAAL…DQAAPLFVQV (105 aa). Basic residues predominate over residues 796 to 805; it reads KARFAARHSS. Disordered regions lie at residues 796–887, 901–942, 1012–1054, and 1076–1301; these read KARF…SSPV, AQAA…TTAA, ANLP…QALP, and QRDV…GQKP. Over residues 842 to 857 the composition is skewed to acidic residues; the sequence is HDDDDEEEDSDEDSMG. Residues 865–887 show a composition bias toward polar residues; it reads LLNSTQTPPCSPIKSLNNSSSPV. 3 stretches are compositionally biased toward low complexity: residues 922 to 942, 1034 to 1043, and 1085 to 1107; these read NSQS…TTAA, SSSMSPKKSP, and APSQ…SCSD. A compositionally biased stretch (acidic residues) spans 1108–1120; that stretch reads FDSDEASEGDADG. Over residues 1121-1137 the composition is skewed to basic and acidic residues; that stretch reads DPDRDGGRSRSEERDST. Composition is skewed to polar residues over residues 1151 to 1165 and 1265 to 1278; these read ASLN…NMAI and NTTA…TNNN. The span at 1281–1293 shows a compositional bias: basic and acidic residues; it reads KHSEDSASSERHN. Positions 1305–1378 constitute a PWWP domain; that stretch reads PLQLVWAKCR…TWQWLPANKL (74 aa).

As to quaternary structure, component of the Enok complex composed of at least Br140, enok, Eaf6 and Ing5. As part of the Enok complex, interacts with elg1 and the Elg1 RFC-like complex.

Its subcellular location is the nucleus. In terms of biological role, scaffold subunit of the histone acetyltransferase (HAT) Enok complex which has histone H3 acetyltransferase activity. As part of the Enok complex, associates with the Elg1 RFC-like complex and down-regulates its PCNA-unloading function to promote the G1/S transition. May also play a role in maintaining the protein levels and stability of enok. The polypeptide is Bromodomain-containing protein homolog (Drosophila melanogaster (Fruit fly)).